Reading from the N-terminus, the 286-residue chain is Acyl-CoA thioesterase 2 (286 aa).

Catalysis depends on charge relay system residues D204, T228, and Q278.

The protein belongs to the C/M/P thioester hydrolase family. As to quaternary structure, homotetramer.

The enzyme catalyses a fatty acyl-CoA + H2O = a fatty acid + CoA + H(+). Thioesterase that has relatively broad substrate specificity, hydrolyzing primarily medium- and long-chain acyl-CoA substrates to free fatty acids and CoA. The chain is Acyl-CoA thioesterase 2 (tesB) from Haemophilus influenzae (strain ATCC 51907 / DSM 11121 / KW20 / Rd).